The primary structure comprises 602 residues: Potassium voltage-gated channel subfamily A member 5 (602 aa).

Residues 1 to 107 (MEISLVPMEN…EDQAPQDSGS (107 aa)) form a disordered region. Positions 1–202 (MEISLVPMEN…FYQLGDEAME (202 aa)) are tetramerization domain. At 1-238 (MEISLVPMEN…LIFEYPESSG (238 aa)) the chain is on the cytoplasmic side. Over residues 66 to 78 (PLPPMPQELPQPR) the composition is skewed to pro residues. A Phosphoserine; by CK2 and PKA modification is found at serine 81. Lysine 212 is covalently cross-linked (Glycyl lysine isopeptide (Lys-Gly) (interchain with G-Cter in SUMO)). A helical transmembrane segment spans residues 239 to 260 (SARAIAIVSVLVILISIITFCL). At 261 to 314 (ETLPEFRDERELLRHPPVPPQPPAPAPGANGSGSGVLSSGPTVAPLLPRTLADP) the chain is on the extracellular side. A disordered region spans residues 274–297 (RHPPVPPQPPAPAPGANGSGSGVL). The span at 276–286 (PPVPPQPPAPA) shows a compositional bias: pro residues. Asparagine 290 is a glycosylation site (N-linked (GlcNAc...) asparagine). A helical transmembrane segment spans residues 315 to 336 (FFIVETTCVIWFTFELLVRFFA). Cysteine 337 carries S-palmitoyl cysteine lipidation. Residues 337-347 (CPSKAEFSRNI) are Cytoplasmic-facing. Residues 348–368 (MNIIDIVAIFPYFITLGTELA) traverse the membrane as a helical segment. The Extracellular portion of the chain corresponds to 369 to 384 (EQQPGGGGQNGQQAMS). Residues 385–405 (LAILRVIRLVRVFRIFKLSRH) form a helical; Voltage-sensor membrane-spanning segment. Residues 406 to 420 (SKGLQILGKTLQASM) are Cytoplasmic-facing. Residues 407 to 420 (KGLQILGKTLQASM) are S4-S5 linker. The helical transmembrane segment at 421–442 (RELGLLIFFLFIGVILFSSAVY) threads the bilayer. The Extracellular segment spans residues 443–456 (FAEADNQGSHFSSI). The segment at residues 457 to 468 (PDAFWWAVVTMT) is an intramembrane region (helical). Residues 469 to 474 (TVGYGD) carry the Selectivity filter motif. An intramembrane segment occupies 469 to 476 (TVGYGDMR). Residues 477–483 (PITVGGK) are Extracellular-facing. A helical transmembrane segment spans residues 484–512 (IVGSLCAIAGVLTIALPVPVIVSNFNYFY). Residues 513–602 (HRETDHEEQA…CLDTSRETDL (90 aa)) are Cytoplasmic-facing. Residue lysine 525 forms a Glycyl lysine isopeptide (Lys-Gly) (interchain with G-Cter in SUMO) linkage. 3 positions are modified to phosphoserine; by PKA: serine 535, serine 546, and serine 569. A PDZ-binding motif is present at residues 600 to 602 (TDL).

This sequence belongs to the potassium channel family. A (Shaker) (TC 1.A.1.2) subfamily. Kv1.5/KCNA5 sub-subfamily. Homotetramer and heterotetramer of potassium channel proteins. Interacts with DLG1, which enhances channel currents. Forms a ternary complex with DLG1 and CAV3. Interacts with KCNAB1. Interacts with UBE2I. Interacts with XIRP2; the interaction is required for normal action potential configuration in the heart. Glycosylated. In terms of processing, sumoylated on Lys-212, and Lys-525, preferentially with SUMO3. Sumoylation regulates the voltage sensitivity of the channel. Expressed in the heart (at protein level). Expressed in the brain and weakly expressed in the thymus, skeletal muscle and spleen.

The protein localises to the cell membrane. The catalysed reaction is K(+)(in) = K(+)(out). In terms of biological role, voltage-gated potassium channel that mediates transmembrane potassium transport in excitable membranes. Forms tetrameric potassium-selective channels through which potassium ions pass in accordance with their electrochemical gradient. The channel alternates between opened and closed conformations in response to the voltage difference across the membrane. Can form functional homotetrameric channels and heterotetrameric channels that contain variable proportions of KCNA1, KCNA2, KCNA4, KCNA5, and possibly other family members as well; channel properties depend on the type of alpha subunits that are part of the channel. Channel properties are modulated by cytoplasmic beta subunits that regulate the subcellular location of the alpha subunits and promote rapid inactivation. Homotetrameric channels display rapid activation and slow inactivation. Required for normal electrical conduction including formation of the infranodal ventricular conduction system and normal action potential configuration, as a result of its interaction with XIRP2. May play a role in regulating the secretion of insulin in normal pancreatic islets. Voltage-gated potassium channel that mediates transmembrane potassium transport in excitable membranes. Forms tetrameric potassium-selective channels through which potassium ions pass in accordance with their electrochemical gradient. The channel alternates between opened and closed conformations in response to the voltage difference across the membrane. Functionally, inactive. Inhibits expression of isoform 1 and isoform 2. This is Potassium voltage-gated channel subfamily A member 5 (Kcna5) from Mus musculus (Mouse).